The following is a 172-amino-acid chain: Mesogenin-1 (172 aa).

Positions 1–69 (METLHHPLVK…SPYSSSSHTQ (69 aa)) are disordered. Polar residues predominate over residues 18–29 (SSDSEPNSSCMA). The segment covering 42-66 (SLSQTPSPQSLSPAVSYESPYSSSS) has biased composition (low complexity). The bHLH domain maps to 108-162 (QRRRKASEREKLRMRAIAEALHTLRNNLPPMYSQGRQPLTKIQTLKCTINYISEL).

The protein localises to the nucleus. Its function is as follows. Involved in specifying the paraxial, but not dorsal, mesoderm. May regulate the expression of T-box transcription factors required for mesoderm formation and differentiation, such as brachyury T, wnt8, vegt and eomes. This Xenopus tropicalis (Western clawed frog) protein is Mesogenin-1 (msgn1).